The chain runs to 452 residues: MGLRDSLKEREDRRSSEEEGDARQSWMTRESTTGWRKESTAALGTPVADWQCVLLLQFGALQQKLLKAFPRAGPRPTTTLVPARPERARKKPHSQPPPSTHMALQAQATASPSPSPSPTRGRTGSGEWPDDAEKLPIAATASPARSSDAVELVVVASTRHAAAAKYVPRRSTSHTADPNPGRGGGGGSAGWYSWNGGRTRTAAPPRHARADPPPAPPRRQQPVEAPPPPPPPPPPPAPAPALPPPVPPSPPAPAQAPVPPSATAPAPAPVPAPRASSPHVQFRSADQVVPNILSRKRRAAAMQRTALLARGAAAGLCLAALAVLAADTRKGWARDSYSNYTQFRYSEAVNVIGFIYSVFQFVALVELMRRNKHLIPHPKRDLFDFTMDQVLTYLLISSSSSATARVSDLIDNWGSDPFPSMANGSIAISFLAFAVFAICSLISAYNLFRRDV.

Residues 1–17 (MGLRDSLKEREDRRSSE) are compositionally biased toward basic and acidic residues. Disordered regions lie at residues 1–39 (MGLR…RKES), 71–147 (RAGP…ARSS), and 164–283 (AKYV…VQFR). At 1–305 (MGLRDSLKER…KRRAAAMQRT (305 aa)) the chain is on the cytoplasmic side. Positions 25–34 (SWMTRESTTG) are enriched in polar residues. Composition is skewed to low complexity over residues 105–126 (QAQA…TGSG) and 190–205 (GWYS…AAPP). A compositionally biased stretch (pro residues) spans 211–272 (DPPPAPPRRQ…TAPAPAPVPA (62 aa)). The helical transmembrane segment at 306 to 326 (ALLARGAAAGLCLAALAVLAA) threads the bilayer. The Extracellular segment spans residues 327–347 (DTRKGWARDSYSNYTQFRYSE). The N-linked (GlcNAc...) asparagine glycan is linked to N339. A helical membrane pass occupies residues 348 to 368 (AVNVIGFIYSVFQFVALVELM). Residues 369–389 (RRNKHLIPHPKRDLFDFTMDQ) are Cytoplasmic-facing. A helical membrane pass occupies residues 390–406 (VLTYLLISSSSSATARV). At 407–423 (SDLIDNWGSDPFPSMAN) the chain is on the extracellular side. A glycan (N-linked (GlcNAc...) asparagine) is linked at N423. The chain crosses the membrane as a helical span at residues 424-444 (GSIAISFLAFAVFAICSLISA). Over 445–452 (YNLFRRDV) the chain is Cytoplasmic.

Belongs to the Casparian strip membrane proteins (CASP) family. In terms of assembly, homodimer and heterodimers.

The protein localises to the cell membrane. The protein is CASP-like protein 4A1 of Sorghum bicolor (Sorghum).